The following is a 258-amino-acid chain: Sugar fermentation stimulation protein homolog (258 aa).

It belongs to the SfsA family.

In Prochlorococcus marinus (strain NATL2A), this protein is Sugar fermentation stimulation protein homolog.